The sequence spans 138 residues: Translation initiation factor 2 subunit beta (138 aa).

Belongs to the eIF-2-beta/eIF-5 family. In terms of assembly, heterotrimer composed of an alpha, a beta and a gamma chain.

EIF-2 functions in the early steps of protein synthesis by forming a ternary complex with GTP and initiator tRNA. The chain is Translation initiation factor 2 subunit beta from Methanopyrus kandleri (strain AV19 / DSM 6324 / JCM 9639 / NBRC 100938).